The sequence spans 359 residues: Peptide chain release factor 1 (359 aa).

N5-methylglutamine is present on glutamine 235.

Belongs to the prokaryotic/mitochondrial release factor family. In terms of processing, methylated by PrmC. Methylation increases the termination efficiency of RF1.

Its subcellular location is the cytoplasm. Functionally, peptide chain release factor 1 directs the termination of translation in response to the peptide chain termination codons UAG and UAA. The protein is Peptide chain release factor 1 of Polynucleobacter necessarius subsp. necessarius (strain STIR1).